Consider the following 96-residue polypeptide: MNIRPLHDRVIVERQEVESKSAGGIVLTGSAAEKSTRGKVLAVGKGRILENGSVQPLDVKVGDTVIFAESYGTKTEKIDGKEVLILAEHDILAIVE.

It belongs to the GroES chaperonin family. As to quaternary structure, heptamer of 7 subunits arranged in a ring. Interacts with the chaperonin GroEL.

The protein resides in the cytoplasm. In terms of biological role, together with the chaperonin GroEL, plays an essential role in assisting protein folding. The GroEL-GroES system forms a nano-cage that allows encapsulation of the non-native substrate proteins and provides a physical environment optimized to promote and accelerate protein folding. GroES binds to the apical surface of the GroEL ring, thereby capping the opening of the GroEL channel. This is Co-chaperonin GroES 1 from Vibrio cholerae serotype O1 (strain ATCC 39315 / El Tor Inaba N16961).